Consider the following 161-residue polypeptide: Phosphopantetheine adenylyltransferase (161 aa).

Residue Thr9 coordinates substrate. Residues 9–10 (TF) and His17 contribute to the ATP site. Lys41, Leu73, and Arg87 together coordinate substrate. Residues 88-90 (GLR), Glu98, and 123-129 (YQFISGT) contribute to the ATP site.

The protein belongs to the bacterial CoaD family. As to quaternary structure, homohexamer. Requires Mg(2+) as cofactor.

It is found in the cytoplasm. The catalysed reaction is (R)-4'-phosphopantetheine + ATP + H(+) = 3'-dephospho-CoA + diphosphate. It functions in the pathway cofactor biosynthesis; coenzyme A biosynthesis; CoA from (R)-pantothenate: step 4/5. Its function is as follows. Reversibly transfers an adenylyl group from ATP to 4'-phosphopantetheine, yielding dephospho-CoA (dPCoA) and pyrophosphate. This is Phosphopantetheine adenylyltransferase from Cupriavidus pinatubonensis (strain JMP 134 / LMG 1197) (Cupriavidus necator (strain JMP 134)).